The primary structure comprises 200 residues: Small ribosomal subunit protein uS5 (200 aa).

A compositionally biased stretch (polar residues) spans 1–12 (MGRPRTSQTRGQ). The segment at 1–49 (MGRPRTSQTRGQGPSGATGGNPRGGGSTTRERDARGARPGERDGGSEIQ) is disordered. Residues 13 to 27 (GPSGATGGNPRGGGS) show a composition bias toward gly residues. Residues 29–49 (TRERDARGARPGERDGGSEIQ) are compositionally biased toward basic and acidic residues. One can recognise an S5 DRBM domain in the interval 48 to 111 (IQDRVVQIRR…EKARHAMFDV (64 aa)).

It belongs to the universal ribosomal protein uS5 family. In terms of assembly, part of the 30S ribosomal subunit. Contacts proteins S4 and S8.

Its function is as follows. With S4 and S12 plays an important role in translational accuracy. Located at the back of the 30S subunit body where it stabilizes the conformation of the head with respect to the body. This chain is Small ribosomal subunit protein uS5, found in Rubrobacter xylanophilus (strain DSM 9941 / JCM 11954 / NBRC 16129 / PRD-1).